The sequence spans 305 residues: GTPase Era (305 aa).

Positions 13–181 (RCGYVAIVGR…EKLVAERLPE (169 aa)) constitute an Era-type G domain. A G1 region spans residues 21–28 (GRPNVGKS). 21 to 28 (GRPNVGKS) contacts GTP. Residues 47-51 (QTTRH) are G2. Residues 68-71 (DTPG) form a G3 region. Residues 68–72 (DTPGL) and 130–133 (NKTD) each bind GTP. The segment at 130 to 133 (NKTD) is G4. Residues 160-162 (ISA) form a G5 region. The region spanning 204 to 288 (VREKIMRQLG…MLNLWVKVKG (85 aa)) is the KH type-2 domain.

It belongs to the TRAFAC class TrmE-Era-EngA-EngB-Septin-like GTPase superfamily. Era GTPase family. Monomer.

The protein resides in the cytoplasm. Its subcellular location is the cell inner membrane. Its function is as follows. An essential GTPase that binds both GDP and GTP, with rapid nucleotide exchange. Plays a role in 16S rRNA processing and 30S ribosomal subunit biogenesis and possibly also in cell cycle regulation and energy metabolism. The polypeptide is GTPase Era (Pseudomonas aeruginosa (strain LESB58)).